The sequence spans 552 residues: Glucose-6-phosphate isomerase (552 aa).

Glu357 acts as the Proton donor in catalysis. Catalysis depends on residues His388 and Lys516. The segment at 525 to 552 is disordered; it reads ELASTKPPKHDSSTNALIERYRTRGCRS.

This sequence belongs to the GPI family.

Its subcellular location is the cytoplasm. The enzyme catalyses alpha-D-glucose 6-phosphate = beta-D-fructose 6-phosphate. It functions in the pathway carbohydrate biosynthesis; gluconeogenesis. Its pathway is carbohydrate degradation; glycolysis; D-glyceraldehyde 3-phosphate and glycerone phosphate from D-glucose: step 2/4. In terms of biological role, catalyzes the reversible isomerization of glucose-6-phosphate to fructose-6-phosphate. The chain is Glucose-6-phosphate isomerase from Laribacter hongkongensis (strain HLHK9).